We begin with the raw amino-acid sequence, 83 residues long: DNA-directed RNA polymerase subunit Rpo5 (83 aa).

It belongs to the archaeal Rpo5/eukaryotic RPB5 RNA polymerase subunit family. In terms of assembly, part of the RNA polymerase complex.

It localises to the cytoplasm. It catalyses the reaction RNA(n) + a ribonucleoside 5'-triphosphate = RNA(n+1) + diphosphate. In terms of biological role, DNA-dependent RNA polymerase (RNAP) catalyzes the transcription of DNA into RNA using the four ribonucleoside triphosphates as substrates. This Metallosphaera sedula (strain ATCC 51363 / DSM 5348 / JCM 9185 / NBRC 15509 / TH2) protein is DNA-directed RNA polymerase subunit Rpo5.